The following is a 278-amino-acid chain: Polyamine aminopropyltransferase (278 aa).

Positions Glu-5–Lys-238 constitute a PABS domain. Gln-34 serves as a coordination point for S-methyl-5'-thioadenosine. Spermidine-binding residues include His-65 and Asp-89. S-methyl-5'-thioadenosine contacts are provided by residues Glu-109 and Asp-140–Gly-141. Asp-158 (proton acceptor) is an active-site residue. Residue Asp-158–Asp-161 coordinates spermidine. Pro-165 contacts S-methyl-5'-thioadenosine.

It belongs to the spermidine/spermine synthase family. In terms of assembly, homodimer or homotetramer.

The protein resides in the cytoplasm. The catalysed reaction is S-adenosyl 3-(methylsulfanyl)propylamine + putrescine = S-methyl-5'-thioadenosine + spermidine + H(+). It participates in amine and polyamine biosynthesis; spermidine biosynthesis; spermidine from putrescine: step 1/1. Functionally, catalyzes the irreversible transfer of a propylamine group from the amino donor S-adenosylmethioninamine (decarboxy-AdoMet) to putrescine (1,4-diaminobutane) to yield spermidine. This is Polyamine aminopropyltransferase from Caldicellulosiruptor saccharolyticus (strain ATCC 43494 / DSM 8903 / Tp8T 6331).